The chain runs to 270 residues: MSVLQTELPSLSGKTCLITGGAGGLGKAIAIAFLKAGSNVVICDINEERVKQTSAELEGMGSLLAKTVDITKLSEVQQLFDDISSKFVKLDILINNAAIMDRFEPVGDVDPELWDRVLAVNLTAPLLLSKLAVQGMLLQENTNGSIINIASGSAKAGWLAGKHPITMQTLKHGLIGLTKSTAAFYGTKGIRCNALMLGIIGGTNLNDAFQNGVHPEGRQKLGEILSGVRPLPCDVKDIAELCVSLATGPGWNVVNGAVIAVDRGWTSIVG.

The NADP(+) site is built by Ile18, Asp69, Asn96, Lys130, Lys171, Ile200, and Asn204. The Lowers pKa of active site Tyr role is filled by Lys171.

The protein belongs to the short-chain dehydrogenases/reductases (SDR) family.

It functions in the pathway secondary metabolite biosynthesis; terpenoid biosynthesis. Functionally, short chain dehydrogenase/reductase; part of the gene cluster that mediates the biosynthesis of diterpenoid pyrones. The first step of the pathway is the synthesis of the alpha-pyrone moiety by the polyketide synthase dpfgA via condensation of one acetyl-CoA starter unit with 3 malonyl-CoA units and 2 methylations. The alpha-pyrone is then combined with geranylgeranyl pyrophosphate (GGPP) formed by the GGPP synthase dpfgD through the action of the prenyltransferase dpfgC to yield a linear alpha-pyrone diterpenoid. Subsequent steps in the diterpenoid pyrone biosynthetic pathway involve the decalin core formation, which is initiated by the epoxidation of the C10-C11 olefin by the FAD-dependent oxidoreductase dpfgE, and is followed by a cyclization cascade catalyzed by the terpene cyclase dpfgB. The short chain dehydrogenase/reductase dpfgG then oxidizes the 8S hydroxy group to a ketone and the short chain dehydrogenase/reductase dpfgH reduces the ketone to the 8R hydroxy group to yield higginsianin B. Higginsianin B is further methylated by the methyltransferase dpfgI to produce the intermediate named FDDP B. The cytochrome P450 monooxygenase dfgpJ then catalyzes a three-step oxidation at C-27 to generate a carboxylic acid as well as C-26 hydroxylation. Finally, methyltransferase dpfgK methylates the carboxylic acid generated by dpfgJ, yielding the final diterpenoid pyrones from the pathway which were named FDDP D and FDDP E. The sequence is that of Short chain dehydrogenase/reductase dpfgG from Gibberella zeae (strain ATCC MYA-4620 / CBS 123657 / FGSC 9075 / NRRL 31084 / PH-1) (Wheat head blight fungus).